A 409-amino-acid chain; its full sequence is Accessory Sec system protein translocase subunit SecY2 (409 aa).

10 helical membrane passes run 16-36 (ILIT…PIPG), 61-81 (LSQV…MILL), 104-124 (VVML…FQYH), 132-152 (LLLA…IGNL), 161-181 (MTIL…PLIF), 190-210 (LAII…ITFE), 242-262 (GMAF…IILL), 286-306 (GVVI…FVNI), 341-361 (LFGT…LLFA), and 374-394 (TGIF…FQVI).

This sequence belongs to the SecY/SEC61-alpha family. SecY2 subfamily. In terms of assembly, component of the accessory SecA2/SecY2 protein translocase complex required to export cell wall proteins. May form heterotrimers with SecE and SecG subunits.

Its subcellular location is the cell membrane. Part of the accessory SecA2/SecY2 system specifically required for export of possible cell wall proteins. The central subunit of a protein translocation channel. The polypeptide is Accessory Sec system protein translocase subunit SecY2 (Streptococcus agalactiae serotype III (strain NEM316)).